The chain runs to 549 residues: MGGFKIPNYEGVDPTGSWYSVLTPLLFLERAGKYFKDKTAVVYRDSRYTYSTFYDNVMVQASALMRRGFSREDKLSFISRNRPEFLESFFGVPYAGGVLVPINFRLSPKEMAYIINHSDSKFVVVDEPYLNSLLEVKDQIKAEIILLEDPDNPSASETARKEVRMTYRELVKGGSRDPLPIPAKEEYSMITLYYTSGTTGLPKGVMHHHRGAFLNAMAEVLEHQMDLNSVYLWTLPMFHAASWGFSWATVAVGATNVCLDKVDYPLIYRLVEKERVTHMCAAPTVYVNLADYMKRNNLKFSNRVHMLVAGAAPAPATLKAMQEIGGYMCHVYGLTETYGPHSICEWRREWDSLPLEEQAKLKARQGIPYVSFEMDVFDANGKPVPWDGKTIGEVVMRGHNVALGYYKNPEKTAESFRDGWFHSGDAAVVHPDGYIEIVDRFKDLINTGGEKVSSILVEKTLMEIPGVKAVAVYGTPDEKWGEVVTARIELQEGVKLTEEEVIKFCKERLAHFECPKIVEFGPIPMTATGKMQKYVLRNEAKAKANKEKS.

ATP-binding positions include 195 to 203 (TSGTTGLPK), 336 to 341 (ETYGPH), Asp-425, and Arg-440. CoA-binding positions include 448–450 (GGE), Lys-506, and 514–516 (CPK). Lys-530 contributes to the ATP binding site.

Belongs to the ATP-dependent AMP-binding enzyme family. Mg(2+) serves as cofactor. It depends on Mn(2+) as a cofactor.

It carries out the reaction 4-hydroxybutanoate + ATP + CoA = 4-hydroxybutanoyl-CoA + AMP + diphosphate. The enzyme catalyses acetate + ATP + CoA = acetyl-CoA + AMP + diphosphate. It catalyses the reaction propanoate + ATP + CoA = propanoyl-CoA + AMP + diphosphate. The catalysed reaction is a medium-chain fatty acid + ATP + CoA = a medium-chain fatty acyl-CoA + AMP + diphosphate. In terms of biological role, catalyzes the ligation of coenzyme A (CoA) to 4-hydroxybutyrate (4HB). It can also use butyrate, valerate, propionate, acetate and 3-hydroxybutyrate (3HB) as substrates. The chain is 4-hydroxybutyrate--CoA ligase 2 from Metallosphaera sedula (strain ATCC 51363 / DSM 5348 / JCM 9185 / NBRC 15509 / TH2).